A 181-amino-acid chain; its full sequence is Nucleoside triphosphate/diphosphate phosphatase (181 aa).

R26 acts as the Proton donor in catalysis. Mg(2+) is bound by residues N90, D106, D108, D110, D123, and E126.

The protein belongs to the Ntdp family. Mg(2+) is required as a cofactor.

The catalysed reaction is a ribonucleoside 5'-triphosphate + H2O = a ribonucleoside 5'-diphosphate + phosphate + H(+). It carries out the reaction a ribonucleoside 5'-diphosphate + H2O = a ribonucleoside 5'-phosphate + phosphate + H(+). In terms of biological role, has nucleoside phosphatase activity towards nucleoside triphosphates and nucleoside diphosphates. This chain is Nucleoside triphosphate/diphosphate phosphatase, found in Staphylococcus carnosus (strain TM300).